Reading from the N-terminus, the 218-residue chain is MRLILLGAPGAGKGTQAGFIKDKFNIPQISTGDMLRAAVKAGTPLGIAAKKIMDEGGLVSDDIIIGLVKDRLKEADCAKGYLFDGFPRTIPQADAMKEAGVAIDYVLEIDVPDEAIVERMSGRRVHPASGRTYHVKFNPPKVAGKDDLTGEELIQRDDDKEETVKKRLSVYHEQTEVLVGYYNQWAASGQPGAPKYRKIAGVGPVDQIRDSAFAALAG.

10 to 15 lines the ATP pocket; sequence GAGKGT. An NMP region spans residues 30–59; that stretch reads STGDMLRAAVKAGTPLGIAAKKIMDEGGLV. AMP-binding positions include T31, R36, 57 to 59, 85 to 88, and Q92; these read GLV and GFPR. The LID stretch occupies residues 122 to 159; the sequence is GRRVHPASGRTYHVKFNPPKVAGKDDLTGEELIQRDDD. ATP contacts are provided by residues R123 and 132–133; that span reads TY. AMP is bound by residues R156 and R167. G203 provides a ligand contact to ATP.

This sequence belongs to the adenylate kinase family. Monomer.

Its subcellular location is the cytoplasm. The enzyme catalyses AMP + ATP = 2 ADP. Its pathway is purine metabolism; AMP biosynthesis via salvage pathway; AMP from ADP: step 1/1. Functionally, catalyzes the reversible transfer of the terminal phosphate group between ATP and AMP. Plays an important role in cellular energy homeostasis and in adenine nucleotide metabolism. The sequence is that of Adenylate kinase from Janthinobacterium sp. (strain Marseille) (Minibacterium massiliensis).